Consider the following 121-residue polypeptide: MILWGGSGGYLVIILYTIMPVKTIEEYEYDFFRFILIFFFFQKGSKHLSVVISILKYINAFKGLLFHVCLHFCSIHRRLFQYLVRVLQVFQLFFKAAVISGIFRYTIPIHFLQKFFKLFDN.

3 helical membrane passes run 1–21 (MILW…IMPV), 55–75 (LKYI…FCSI), and 92–112 (LFFK…IHFL).

It is found in the membrane. This is an uncharacterized protein from Saccharomyces cerevisiae (strain ATCC 204508 / S288c) (Baker's yeast).